The sequence spans 740 residues: Ethylene receptor 1 (740 aa).

3 consecutive transmembrane segments (helical) span residues Ile-23–Val-43, Trp-53–Leu-73, and Ala-95–Val-115. Residues Cys-65 and His-69 each contribute to the Cu cation site. The GAF domain occupies Asp-158 to Leu-307. Residues Val-350–Ile-587 enclose the Histidine kinase domain. A Phosphohistidine; by autocatalysis modification is found at His-353. The Response regulatory domain occupies Lys-615–Leu-732. A 4-aspartylphosphate modification is found at Asp-663.

This sequence belongs to the ethylene receptor family. Homodimer; disulfide-linked. Cu cation is required as a cofactor. In terms of processing, activation probably requires a transfer of a phosphate group between a His in the transmitter domain and an Asp of the receiver domain.

It is found in the endoplasmic reticulum membrane. The enzyme catalyses ATP + protein L-histidine = ADP + protein N-phospho-L-histidine.. In terms of biological role, may act early in the ethylene signal transduction pathway, possibly as an ethylene receptor, or as a regulator of the pathway. This Pelargonium hortorum (Common geranium) protein is Ethylene receptor 1 (ETR1).